The primary structure comprises 37 residues: M-oxotoxin-Ot2d (37 aa).

In terms of tissue distribution, expressed by the venom gland.

The protein resides in the secreted. Disrupts biological membranes, particularly those rich in phosphocholine. Has antimicrobial activity against Gram-negative bacterium E.coli, Gram-positive bacteria B.subtilis and S.aureus, and hemolytic activity against sheep, pig and guinea pig red blood cells. Has insecticidal activity against S.frugiperda ovarian cells by opening non-selective ion channels. Enhances the insecticidal activity of spider venom neurotoxic peptides. The polypeptide is M-oxotoxin-Ot2d (Oxyopes takobius (Lynx spider)).